The following is a 345-amino-acid chain: Protein lifeguard 1 (345 aa).

The segment at 1–115 (MSHEKSFLVS…GNYQEEGPPS (115 aa)) is disordered. 2 stretches are compositionally biased toward pro residues: residues 24–46 (APMP…PFQP) and 79–98 (GPYP…PPFQ). The next 7 membrane-spanning stretches (helical) occupy residues 139–159 (VFLV…IFTF), 171–191 (VWTY…LSCC), 202–222 (LVAL…IASF), 227–247 (AVIM…IFSM), 257–277 (MGVL…CIFI), 281–301 (ILEI…LAVD), and 320–340 (FAAL…LTII).

It belongs to the BI1 family. LFG subfamily.

It is found in the membrane. Functionally, potential apoptotic regulator. The polypeptide is Protein lifeguard 1 (Grina) (Mus musculus (Mouse)).